A 447-amino-acid polypeptide reads, in one-letter code: MLKFIFMLMFMFPLSFLKNFYWTVQNLIFLLTFMFMINLSSLNYFNYISYYFGLDMVSYGLILLSFWICGLMLMASEKVFSTNNYEKLFVFMILFLLFMLVLTFSSMSVFMFYLFFEASLIPTLFLILGWGYQPERLQAGVYLLFYTLLASLPLLIGIFYILNSKNTLSFTLLLNYSFSNFNLLYLSLVFAFLVKMPMFLVHLWLPKAHVEAPVSGSMILAGILLKLGGYGLLRMFSLLQISGVKYNYWWISISLVGGVLISLVCLRQTDLKALIAYSSVAHMGIVLSGLLTMTYWGLTGSYALMIAHGLCSSGLFCLANISYERMGSRSLLINKGLLNFMPTLSLWWFLLCSGNMAAPPTLNLLGEISLLNSIVSWSWITMIMLSFLSFFSAAYSLYLFAYSQHGKIYSGVYFFSVGTTREFLLLMLHWLPLNLLILKSNFCMLWI.

The next 13 membrane-spanning stretches (helical) occupy residues 28-48, 56-76, 89-109, 110-130, 141-161, 183-203, 213-233, 246-266, 273-293, 298-318, 331-351, 374-394, and 409-431; these read IFLL…FNYI, MVSY…LMAS, FVFM…SMSV, FMFY…ILGW, VYLL…IFYI, LLYL…LVHL, PVSG…YGLL, YNYW…LVCL, ALIA…LLTM, LTGS…LFCL, LLIN…WFLL, IVSW…FSAA, and YSGV…LHWL.

Belongs to the complex I subunit 4 family.

It localises to the mitochondrion membrane. The catalysed reaction is a ubiquinone + NADH + 5 H(+)(in) = a ubiquinol + NAD(+) + 4 H(+)(out). Core subunit of the mitochondrial membrane respiratory chain NADH dehydrogenase (Complex I) that is believed to belong to the minimal assembly required for catalysis. Complex I functions in the transfer of electrons from NADH to the respiratory chain. The immediate electron acceptor for the enzyme is believed to be ubiquinone. The protein is NADH-ubiquinone oxidoreductase chain 4 (mt:ND4) of Anopheles gambiae (African malaria mosquito).